The chain runs to 340 residues: Ketol-acid reductoisomerase (NADP(+)) (340 aa).

In terms of domain architecture, KARI N-terminal Rossmann spans 1 to 183 (MAITVYYDKD…GGGRTGIIET (183 aa)). Residues 26 to 29 (FGSQ), Arg-49, Ser-52, Ser-54, and 84 to 87 (DEIQ) each bind NADP(+). His-109 is an active-site residue. Gly-135 serves as a coordination point for NADP(+). The region spanning 184–329 (TFKAETETDL…RNLRAMMPWI (146 aa)) is the KARI C-terminal knotted domain. Positions 192, 196, 228, and 232 each coordinate Mg(2+). A substrate-binding site is contributed by Ser-253.

Belongs to the ketol-acid reductoisomerase family. Mg(2+) is required as a cofactor.

The catalysed reaction is (2R)-2,3-dihydroxy-3-methylbutanoate + NADP(+) = (2S)-2-acetolactate + NADPH + H(+). The enzyme catalyses (2R,3R)-2,3-dihydroxy-3-methylpentanoate + NADP(+) = (S)-2-ethyl-2-hydroxy-3-oxobutanoate + NADPH + H(+). It functions in the pathway amino-acid biosynthesis; L-isoleucine biosynthesis; L-isoleucine from 2-oxobutanoate: step 2/4. It participates in amino-acid biosynthesis; L-valine biosynthesis; L-valine from pyruvate: step 2/4. In terms of biological role, involved in the biosynthesis of branched-chain amino acids (BCAA). Catalyzes an alkyl-migration followed by a ketol-acid reduction of (S)-2-acetolactate (S2AL) to yield (R)-2,3-dihydroxy-isovalerate. In the isomerase reaction, S2AL is rearranged via a Mg-dependent methyl migration to produce 3-hydroxy-3-methyl-2-ketobutyrate (HMKB). In the reductase reaction, this 2-ketoacid undergoes a metal-dependent reduction by NADPH to yield (R)-2,3-dihydroxy-isovalerate. This Campylobacter jejuni subsp. doylei (strain ATCC BAA-1458 / RM4099 / 269.97) protein is Ketol-acid reductoisomerase (NADP(+)).